Consider the following 334-residue polypeptide: Probable quinone oxidoreductase (334 aa).

Belongs to the zinc-containing alcohol dehydrogenase family. Quinone oxidoreductase subfamily.

It carries out the reaction 2 a quinone + NADPH + H(+) = 2 a 1,4-benzosemiquinone + NADP(+). The sequence is that of Probable quinone oxidoreductase (ZTA1) from Saccharomyces cerevisiae (strain ATCC 204508 / S288c) (Baker's yeast).